The following is a 137-amino-acid chain: Small ribosomal subunit protein uS11A (137 aa).

Ser2 carries the N-acetylserine modification. Residues 117–137 are disordered; the sequence is DVTPVPSDSTRKKGGRRGRRL. Over residues 128-137 the composition is skewed to basic residues; it reads KKGGRRGRRL.

It belongs to the universal ribosomal protein uS11 family. Component of the small ribosomal subunit (SSU). Mature yeast ribosomes consist of a small (40S) and a large (60S) subunit. The 40S small subunit contains 1 molecule of ribosomal RNA (18S rRNA) and 33 different proteins (encoded by 57 genes). The large 60S subunit contains 3 rRNA molecules (25S, 5.8S and 5S rRNA) and 46 different proteins (encoded by 81 genes). uS11 interacts with eS1 forming part of the mRNA exit tunnel. uS11 interacts with snoRNA U3. uS11 interacts with MPP10. Component of the ribosomal small subunit (SSU) processome composed of at least 40 protein subunits and snoRNA U3. Post-translationally, N-terminally acetylated by acetyltransferase NatA.

The protein localises to the cytoplasm. It is found in the nucleus. Its subcellular location is the nucleolus. In terms of biological role, component of the ribosome, a large ribonucleoprotein complex responsible for the synthesis of proteins in the cell. The small ribosomal subunit (SSU) binds messenger RNAs (mRNAs) and translates the encoded message by selecting cognate aminoacyl-transfer RNA (tRNA) molecules. The large subunit (LSU) contains the ribosomal catalytic site termed the peptidyl transferase center (PTC), which catalyzes the formation of peptide bonds, thereby polymerizing the amino acids delivered by tRNAs into a polypeptide chain. The nascent polypeptides leave the ribosome through a tunnel in the LSU and interact with protein factors that function in enzymatic processing, targeting, and the membrane insertion of nascent chains at the exit of the ribosomal tunnel. uS11 is involved in nucleolar processing of pre-18S ribosomal RNA and ribosome assembly. The sequence is that of Small ribosomal subunit protein uS11A from Saccharomyces cerevisiae (strain ATCC 204508 / S288c) (Baker's yeast).